Reading from the N-terminus, the 139-residue chain is Large ribosomal subunit protein uL13 (139 aa).

Belongs to the universal ribosomal protein uL13 family. In terms of assembly, part of the 50S ribosomal subunit.

This protein is one of the early assembly proteins of the 50S ribosomal subunit, although it is not seen to bind rRNA by itself. It is important during the early stages of 50S assembly. This is Large ribosomal subunit protein uL13 from Aliarcobacter butzleri (strain RM4018) (Arcobacter butzleri).